Consider the following 1569-residue polypeptide: Pentafunctional AROM polypeptide (1569 aa).

The 3-dehydroquinate synthase stretch occupies residues 1–382 (MAEAKKPGPE…HEPRASVVDD (382 aa)). NAD(+) contacts are provided by residues 49–51 (DTN), 84–87 (EASK), 115–117 (GGV), and aspartate 120. Arginine 131 lines the 7-phospho-2-dehydro-3-deoxy-D-arabino-heptonate pocket. NAD(+) is bound at residue 140 to 141 (TT). 7-phospho-2-dehydro-3-deoxy-D-arabino-heptonate contacts are provided by aspartate 147 and lysine 153. NAD(+) is bound at residue lysine 162. Asparagine 163 lines the 7-phospho-2-dehydro-3-deoxy-D-arabino-heptonate pocket. Residues 180–183 (FLET) and asparagine 191 contribute to the NAD(+) site. Position 195 (glutamate 195) interacts with Zn(2+). 7-phospho-2-dehydro-3-deoxy-D-arabino-heptonate-binding positions include 195-198 (EVVK) and lysine 248. Catalysis depends on glutamate 258, which acts as the Proton acceptor; for 3-dehydroquinate synthase activity. 7-phospho-2-dehydro-3-deoxy-D-arabino-heptonate is bound by residues 262 to 266 (RNLLN) and histidine 269. Histidine 269 is a binding site for Zn(2+). The Proton acceptor; for 3-dehydroquinate synthase activity role is filled by histidine 273. Residues histidine 285 and lysine 354 each contribute to the 7-phospho-2-dehydro-3-deoxy-D-arabino-heptonate site. Histidine 285 is a Zn(2+) binding site. The segment at 395–837 (VTPGVPSNLD…WDILSQAFKV (443 aa)) is EPSP synthase. Cysteine 819 functions as the For EPSP synthase activity in the catalytic mechanism. A shikimate kinase region spans residues 859–1053 (ERSVFIIGMR…MEKDHSFFVS (195 aa)). Residue 866–873 (GMRGAGKT) coordinates ATP. The tract at residues 1054 to 1267 (LTVPDVSEAA…AAPGQMSAAE (214 aa)) is 3-dehydroquinase. The active-site Proton acceptor; for 3-dehydroquinate dehydratase activity is the histidine 1170. Residue lysine 1198 is the Schiff-base intermediate with substrate; for 3-dehydroquinate dehydratase activity of the active site. The segment at 1280-1569 (PCNFYLFGKP…RDARSAVLGL (290 aa)) is shikimate dehydrogenase.

In the N-terminal section; belongs to the sugar phosphate cyclases superfamily. Dehydroquinate synthase family. This sequence in the 2nd section; belongs to the EPSP synthase family. The protein in the 3rd section; belongs to the shikimate kinase family. It in the 4th section; belongs to the type-I 3-dehydroquinase family. In the C-terminal section; belongs to the shikimate dehydrogenase family. Homodimer. It depends on Zn(2+) as a cofactor.

Its subcellular location is the cytoplasm. It carries out the reaction 7-phospho-2-dehydro-3-deoxy-D-arabino-heptonate = 3-dehydroquinate + phosphate. The catalysed reaction is 3-dehydroquinate = 3-dehydroshikimate + H2O. It catalyses the reaction shikimate + NADP(+) = 3-dehydroshikimate + NADPH + H(+). The enzyme catalyses shikimate + ATP = 3-phosphoshikimate + ADP + H(+). It carries out the reaction 3-phosphoshikimate + phosphoenolpyruvate = 5-O-(1-carboxyvinyl)-3-phosphoshikimate + phosphate. Its pathway is metabolic intermediate biosynthesis; chorismate biosynthesis; chorismate from D-erythrose 4-phosphate and phosphoenolpyruvate: step 2/7. It participates in metabolic intermediate biosynthesis; chorismate biosynthesis; chorismate from D-erythrose 4-phosphate and phosphoenolpyruvate: step 3/7. It functions in the pathway metabolic intermediate biosynthesis; chorismate biosynthesis; chorismate from D-erythrose 4-phosphate and phosphoenolpyruvate: step 4/7. The protein operates within metabolic intermediate biosynthesis; chorismate biosynthesis; chorismate from D-erythrose 4-phosphate and phosphoenolpyruvate: step 5/7. Its pathway is metabolic intermediate biosynthesis; chorismate biosynthesis; chorismate from D-erythrose 4-phosphate and phosphoenolpyruvate: step 6/7. The AROM polypeptide catalyzes 5 consecutive enzymatic reactions in prechorismate polyaromatic amino acid biosynthesis. This is Pentafunctional AROM polypeptide from Fusarium vanettenii (strain ATCC MYA-4622 / CBS 123669 / FGSC 9596 / NRRL 45880 / 77-13-4) (Fusarium solani subsp. pisi).